We begin with the raw amino-acid sequence, 171 residues long: Neuronal vesicle trafficking-associated protein 2 (171 aa).

Residues 1-21 form a disordered region; it reads MVKLNSNPSEKGAKPPSVEDG. Topologically, residues 1–71 are cytoplasmic; that stretch reads MVKLNSNPSE…FRVPKIAEFT (71 aa). The helical; Signal-anchor for type II membrane protein transmembrane segment at 72-92 threads the bilayer; it reads VTILVSLALAFLACIVFLVVY. The Lumenal portion of the chain corresponds to 93–171; that stretch reads KAFTYDHSCP…EPKPPKTQGH (79 aa).

It belongs to the NSG family.

It is found in the membrane. The protein localises to the golgi apparatus. Its subcellular location is the trans-Golgi network membrane. It localises to the cell projection. The protein resides in the dendrite. It is found in the endosome membrane. The protein localises to the early endosome membrane. Its subcellular location is the late endosome membrane. It localises to the lysosome lumen. The protein resides in the cytoplasmic vesicle membrane. It is found in the golgi stack membrane. The protein localises to the endosome. Its subcellular location is the multivesicular body membrane. The sequence is that of Neuronal vesicle trafficking-associated protein 2 from Bos taurus (Bovine).